The sequence spans 400 residues: Diphosphomevalonate decarboxylase (400 aa).

An N-acetylalanine modification is found at Ala2. Residues 23–26, Arg78, 156–161, and Thr212 contribute to the (R)-5-diphosphomevalonate site; these read YWGK and SGSACR.

This sequence belongs to the diphosphomevalonate decarboxylase family. In terms of assembly, homodimer.

The protein localises to the cytoplasm. It catalyses the reaction (R)-5-diphosphomevalonate + ATP = isopentenyl diphosphate + ADP + phosphate + CO2. It participates in steroid biosynthesis; cholesterol biosynthesis. In terms of biological role, catalyzes the ATP dependent decarboxylation of (R)-5-diphosphomevalonate to form isopentenyl diphosphate (IPP). Functions in the mevalonate (MVA) pathway leading to isopentenyl diphosphate (IPP), a key precursor for the biosynthesis of isoprenoids and sterol synthesis. This chain is Diphosphomevalonate decarboxylase (MVD), found in Bos taurus (Bovine).